Here is a 514-residue protein sequence, read N- to C-terminus: Maturase K (514 aa).

This sequence belongs to the intron maturase 2 family. MatK subfamily.

It localises to the plastid. The protein localises to the chloroplast. Functionally, usually encoded in the trnK tRNA gene intron. Probably assists in splicing its own and other chloroplast group II introns. The sequence is that of Maturase K from Erythronium grandiflorum (Yellow avalanche-lily).